A 338-amino-acid polypeptide reads, in one-letter code: Holliday junction branch migration complex subunit RuvB (338 aa).

A disordered region spans residues 1 to 22; sequence MVDDERVVSPETADDHEDSVEK. The segment at 4-185 is large ATPase domain (RuvB-L); the sequence is DERVVSPETA…FGIVEHMAYY (182 aa). Residues leucine 24, arginine 25, glycine 66, lysine 69, threonine 70, threonine 71, 132 to 134, arginine 175, tyrosine 185, and arginine 222 each bind ATP; that span reads EDF. Mg(2+) is bound at residue threonine 70. Positions 186 to 257 are small ATPAse domain (RuvB-S); the sequence is ETTDLQEIVL…IVDHALDLLR (72 aa). The interval 260–338 is head domain (RuvB-H); sequence SAGLDATDIK…HLGRTMPDNN (79 aa). The DNA site is built by arginine 315 and arginine 320.

This sequence belongs to the RuvB family. As to quaternary structure, homohexamer. Forms an RuvA(8)-RuvB(12)-Holliday junction (HJ) complex. HJ DNA is sandwiched between 2 RuvA tetramers; dsDNA enters through RuvA and exits via RuvB. An RuvB hexamer assembles on each DNA strand where it exits the tetramer. Each RuvB hexamer is contacted by two RuvA subunits (via domain III) on 2 adjacent RuvB subunits; this complex drives branch migration. In the full resolvosome a probable DNA-RuvA(4)-RuvB(12)-RuvC(2) complex forms which resolves the HJ.

The protein localises to the cytoplasm. The catalysed reaction is ATP + H2O = ADP + phosphate + H(+). The RuvA-RuvB-RuvC complex processes Holliday junction (HJ) DNA during genetic recombination and DNA repair, while the RuvA-RuvB complex plays an important role in the rescue of blocked DNA replication forks via replication fork reversal (RFR). RuvA specifically binds to HJ cruciform DNA, conferring on it an open structure. The RuvB hexamer acts as an ATP-dependent pump, pulling dsDNA into and through the RuvAB complex. RuvB forms 2 homohexamers on either side of HJ DNA bound by 1 or 2 RuvA tetramers; 4 subunits per hexamer contact DNA at a time. Coordinated motions by a converter formed by DNA-disengaged RuvB subunits stimulates ATP hydrolysis and nucleotide exchange. Immobilization of the converter enables RuvB to convert the ATP-contained energy into a lever motion, pulling 2 nucleotides of DNA out of the RuvA tetramer per ATP hydrolyzed, thus driving DNA branch migration. The RuvB motors rotate together with the DNA substrate, which together with the progressing nucleotide cycle form the mechanistic basis for DNA recombination by continuous HJ branch migration. Branch migration allows RuvC to scan DNA until it finds its consensus sequence, where it cleaves and resolves cruciform DNA. In Levilactobacillus brevis (strain ATCC 367 / BCRC 12310 / CIP 105137 / JCM 1170 / LMG 11437 / NCIMB 947 / NCTC 947) (Lactobacillus brevis), this protein is Holliday junction branch migration complex subunit RuvB.